We begin with the raw amino-acid sequence, 210 residues long: Guanylate kinase (210 aa).

The Guanylate kinase-like domain occupies Gly6–Arg184. ATP is bound at residue Ala13–Thr20.

The protein belongs to the guanylate kinase family.

The protein resides in the cytoplasm. The enzyme catalyses GMP + ATP = GDP + ADP. Its function is as follows. Essential for recycling GMP and indirectly, cGMP. The sequence is that of Guanylate kinase from Chromobacterium violaceum (strain ATCC 12472 / DSM 30191 / JCM 1249 / CCUG 213 / NBRC 12614 / NCIMB 9131 / NCTC 9757 / MK).